A 263-amino-acid polypeptide reads, in one-letter code: Putative methyltransferase DDB_G0268948 (263 aa).

Belongs to the methyltransferase superfamily.

The sequence is that of Putative methyltransferase DDB_G0268948 from Dictyostelium discoideum (Social amoeba).